The sequence spans 63 residues: UPF0391 membrane protein lpg2415 (63 aa).

Transmembrane regions (helical) follow at residues 4–24 (WALI…RGVA) and 33–53 (VLFF…LLGG).

It belongs to the UPF0391 family.

Its subcellular location is the cell membrane. This is UPF0391 membrane protein lpg2415 from Legionella pneumophila subsp. pneumophila (strain Philadelphia 1 / ATCC 33152 / DSM 7513).